We begin with the raw amino-acid sequence, 561 residues long: Delta(24)-sterol reductase (561 aa).

Residues 1-25 (MSDLQTPLVRPKRKKTWVDYFVKFR) lie on the Lumenal side of the membrane. At Ser-2 the chain carries Phosphoserine. Residues 26–46 (WIIVIFIVLPFSATFYFLIYL) form a helical; Signal-anchor membrane-spanning segment. Topologically, residues 47–561 (GDMWSESKSF…HLETAYAEAD (515 aa)) are cytoplasmic. Residues 49–232 (MWSESKSFEK…VAAEIRLIKV (184 aa)) enclose the FAD-binding PCMH-type domain. Residues 518 to 539 (CRKKYRAIGTFMSVYYKSKKGR) are interaction with calmodulin.

It belongs to the DIMINUTO family. As to quaternary structure, interacts with calmodulin.

It is found in the microsome membrane. The catalysed reaction is lathosterol + NADP(+) = 5alpha-cholesta-7,24-dien-3beta-ol + NADPH + H(+). Plays a critical role in the general process of plant cell elongation. Involved in the synthesis of campesterol, an early precursor of brassinolide. Required for the conversion of 24-methylenecholesterol to campesterol and for the conversion of isofucosterol to sitosterol. Necessary for both the isomerization and reduction of 24-methylenecholesterol. Regulates indirectly phytochrome-mediated light responses through the modulation of brassinosteroid biosynthesis. The protein is Delta(24)-sterol reductase (DIM) of Arabidopsis thaliana (Mouse-ear cress).